Consider the following 196-residue polypeptide: uncharacterized protein (196 aa).

This is an uncharacterized protein from Methanocaldococcus jannaschii (strain ATCC 43067 / DSM 2661 / JAL-1 / JCM 10045 / NBRC 100440) (Methanococcus jannaschii).